The following is an 83-amino-acid chain: Acyl carrier protein (83 aa).

Residues 2-77 (NEILSKIKSI…DANQYIKKYL (76 aa)) enclose the Carrier domain. Ser-37 is modified (O-(pantetheine 4'-phosphoryl)serine).

This sequence belongs to the acyl carrier protein (ACP) family. 4'-phosphopantetheine is transferred from CoA to a specific serine of apo-ACP by AcpS. This modification is essential for activity because fatty acids are bound in thioester linkage to the sulfhydryl of the prosthetic group.

Its subcellular location is the cytoplasm. The protein operates within lipid metabolism; fatty acid biosynthesis. Carrier of the growing fatty acid chain in fatty acid biosynthesis. The polypeptide is Acyl carrier protein (Karelsulcia muelleri (strain GWSS) (Sulcia muelleri)).